The primary structure comprises 461 residues: Cytochrome c biogenesis protein CcsB (461 aa).

3 consecutive transmembrane segments (helical) span residues 32–52, 91–111, and 178–198; these read LRLAIALLLIIALFSISGTVI, TWWFLSLLVLFGTSLTACTFT, and IGPIIVHIGIVTILLGSIWGA.

The protein belongs to the Ccs1/CcsB family. In terms of assembly, may interact with CcsA.

It is found in the cellular thylakoid membrane. In terms of biological role, required during biogenesis of c-type cytochromes (cytochrome c6 and cytochrome f) at the step of heme attachment. The chain is Cytochrome c biogenesis protein CcsB from Trichormus variabilis (strain ATCC 29413 / PCC 7937) (Anabaena variabilis).